A 193-amino-acid chain; its full sequence is Phosphoheptose isomerase (193 aa).

One can recognise an SIS domain in the interval 37 to 193; sequence LADSFKAGGK…QLIEKEMVKA (157 aa). Substrate is bound at residue 52–54; it reads NGG. His61 and Glu65 together coordinate Zn(2+). Residues Glu65, 93–94, 119–121, Ser124, and Gln172 contribute to the substrate site; these read ND and STS. Gln172 and His180 together coordinate Zn(2+).

This sequence belongs to the SIS family. GmhA subfamily. As to quaternary structure, homotetramer. The cofactor is Zn(2+).

The protein localises to the cytoplasm. The catalysed reaction is 2 D-sedoheptulose 7-phosphate = D-glycero-alpha-D-manno-heptose 7-phosphate + D-glycero-beta-D-manno-heptose 7-phosphate. The protein operates within carbohydrate biosynthesis; D-glycero-D-manno-heptose 7-phosphate biosynthesis; D-glycero-alpha-D-manno-heptose 7-phosphate and D-glycero-beta-D-manno-heptose 7-phosphate from sedoheptulose 7-phosphate: step 1/1. Its function is as follows. Catalyzes the isomerization of sedoheptulose 7-phosphate in D-glycero-D-manno-heptose 7-phosphate. In Yersinia pseudotuberculosis serotype O:1b (strain IP 31758), this protein is Phosphoheptose isomerase.